The chain runs to 326 residues: ELAV-like protein 1 (326 aa).

3 RRM domains span residues 20–98 (TNLI…VARP), 106–186 (ANLY…FAAN), and 244–322 (WCIF…FKTS).

The protein belongs to the RRM elav family. As to quaternary structure, interacts (via RRM3) with cirbp. Unable to form oligomers. Part of a ribonucleoprotein (RNP) complex, at least composed of elavl1/elrA and/or elavl2/elrB, igf2bp3/vg1RBP, ddx6/Xp54, ybx2/frgy2, lsm14b/rap55b and, in a subset of RNP complexes, stau1/staufen.

The protein localises to the cytoplasm. It localises to the cell cortex. Functionally, RNA-binding protein that binds to the 3'-UTR region of mRNAs and increases their stability. Involved in embryonic stem cells (ESCs) differentiation: preferentially binds mRNAs that are not methylated by N6-methyladenosine (m6A), stabilizing them, promoting ESCs differentiation. Binds to poly-U elements and AU-rich elements (AREs) in the 3'-UTR of target mRNAs. Acts cooperatively with cribp to stabilize AU-rich sequence (ARE)-containing mRNAs. May play a role during gastrulation. Required for the vegetal localization of vg1 mRNA. The chain is ELAV-like protein 1 from Xenopus tropicalis (Western clawed frog).